Here is a 1099-residue protein sequence, read N- to C-terminus: Adenylate-forming reductase Nps11 (1099 aa).

The segment at 29–360 is adenylation (A) domain; that stretch reads AEHNSNVPFF…GTECGGLNSM (332 aa). Residues His-244, 347–348, Thr-352, and 432–435 contribute to the AMP site; these read NV and LVGR. Residues 578–664 form the Carrier domain; sequence WSEESLVVWL…RLSQALARVV (87 aa). Ser-613 bears the O-(pantetheine 4'-phosphoryl)serine mark. Positions 717–952 are reductase (R) domain; that stretch reads LTGSTGGLGS…VVSWLPPHAV (236 aa). Residues 721 to 724, 809 to 811, Tyr-883, and Lys-887 contribute to the NADP(+) site; these read TGGL and NAW.

This sequence belongs to the adenylate-forming reductase family.

Its function is as follows. Adenylate-forming reductase, a natural product biosynthesis enzyme that resembles non-ribosomal peptide synthetases, yet serves to modify one substrate, rather than to condense two or more building blocks. The A-domain preferentially accepts benzoic acid as substrate. The natural product of the enzyme is not yet known. The chain is Adenylate-forming reductase Nps11 from Serpula lacrymans var. lacrymans (strain S7.9) (Dry rot fungus).